The following is a 99-amino-acid chain: Large ribosomal subunit protein uL23 (99 aa).

This sequence belongs to the universal ribosomal protein uL23 family. Part of the 50S ribosomal subunit. Contacts protein L29, and trigger factor when it is bound to the ribosome.

Functionally, one of the early assembly proteins it binds 23S rRNA. One of the proteins that surrounds the polypeptide exit tunnel on the outside of the ribosome. Forms the main docking site for trigger factor binding to the ribosome. This chain is Large ribosomal subunit protein uL23, found in Shewanella sediminis (strain HAW-EB3).